The primary structure comprises 323 residues: tRNA U34 carboxymethyltransferase (323 aa).

Carboxy-S-adenosyl-L-methionine is bound by residues lysine 91, tryptophan 105, lysine 110, glycine 130, 181–182 (IE), methionine 196, tyrosine 200, and arginine 315.

The protein belongs to the class I-like SAM-binding methyltransferase superfamily. CmoB family. Homotetramer.

It catalyses the reaction carboxy-S-adenosyl-L-methionine + 5-hydroxyuridine(34) in tRNA = 5-carboxymethoxyuridine(34) in tRNA + S-adenosyl-L-homocysteine + H(+). Functionally, catalyzes carboxymethyl transfer from carboxy-S-adenosyl-L-methionine (Cx-SAM) to 5-hydroxyuridine (ho5U) to form 5-carboxymethoxyuridine (cmo5U) at position 34 in tRNAs. This Yersinia pseudotuberculosis serotype IB (strain PB1/+) protein is tRNA U34 carboxymethyltransferase.